A 493-amino-acid chain; its full sequence is Alpha-amylase-related protein (493 aa).

The N-terminal stretch at 1–19 (MFKLALTLTLCLAGSLSLA) is a signal peptide. Pyrrolidone carboxylic acid is present on Gln-20. Residues Cys-47 and Cys-103 are joined by a disulfide bond. Ca(2+)-binding residues include Asn-117, Gln-168, and Asp-177. Residues Cys-156 and Cys-170 are joined by a disulfide bond. Position 205 (Arg-205) interacts with chloride. Residue Asp-207 is the Nucleophile of the active site. His-211 is a Ca(2+) binding site. Glu-244 functions as the Proton donor in the catalytic mechanism. Residues Asn-307 and Arg-342 each contribute to the chloride site. Disulfide bonds link Cys-375–Cys-381, Cys-417–Cys-440, and Cys-447–Cys-459.

This sequence belongs to the glycosyl hydrolase 13 family. As to quaternary structure, monomer. The cofactor is Ca(2+). Requires chloride as cofactor.

It is found in the secreted. The enzyme catalyses Endohydrolysis of (1-&gt;4)-alpha-D-glucosidic linkages in polysaccharides containing three or more (1-&gt;4)-alpha-linked D-glucose units.. This is Alpha-amylase-related protein (Amyrel) from Drosophila teissieri (Fruit fly).